Consider the following 919-residue polypeptide: Hyphally regulated cell wall protein 1 (919 aa).

Positions 1–20 are cleaved as a signal peptide; that stretch reads MKVVSNFIFTILLTLNLSAA. Asparagine 236 carries N-linked (GlcNAc...) asparagine glycosylation. Residues 332–483 form a disordered region; it reads SAPESESDLN…QSITSSPGQS (152 aa). The span at 344 to 392 shows a compositional bias: low complexity; it reads TTSSIETSSYSSAATESSVVSESSSAVDSLTSSSLSSKSESSDVVSSTT. Over residues 393–414 the composition is skewed to polar residues; sequence NIESSSTAIETTMNSESSTDAG. Over residues 415–475 the composition is skewed to low complexity; sequence SSSISQSESS…SNALSSTEQS (61 aa). Asparagine 449, asparagine 488, asparagine 580, asparagine 585, asparagine 607, asparagine 619, asparagine 631, asparagine 639, asparagine 647, and asparagine 693 each carry an N-linked (GlcNAc...) asparagine glycan. Residues 567 to 590 are compositionally biased toward low complexity; sequence DATTTTTTSTGGDNSTGGNESGSN. The disordered stretch occupies residues 567 to 839; it reads DATTTTTTST…VANPVTTSTE (273 aa). Composition is skewed to gly residues over residues 607 to 665 and 675 to 707; these read NGSG…GSGS and EGSGSGSGSQTGSGSGSNNGSGSGSQSGSGSGS. Residues 708 to 724 show a composition bias toward low complexity; it reads QSGSESGSNSGSNEGSN. Residues 725–783 show a composition bias toward gly residues; it reads PGAGNGSNEGSGQGSGNGSEAGSGQGSGPNNGSGSGHNDGSGSGSNQGSNPGAGSGSGS. N-linked (GlcNAc...) asparagine glycosylation is found at asparagine 729, asparagine 741, and asparagine 755. A compositionally biased stretch (low complexity) spans 784-798; the sequence is ESGSNAGSHSGSNEG. Residues 799–811 show a composition bias toward basic and acidic residues; sequence AKTDSIEGFHTES. Positions 823-833 are enriched in polar residues; the sequence is ATVTGNSVANP. N-linked (GlcNAc...) asparagine glycosylation is found at asparagine 879 and asparagine 895. Residue asparagine 895 is the site of GPI-anchor amidated asparagine attachment. A propeptide spans 896 to 919 (removed in mature form); it reads GSSIVTGGKSILFGLIVSMVVLFM.

It belongs to the HYR1/IFF family. Component of a multiprotein complex of 250 kDa composed of at least HYR1, MP65, and PRA1. Post-translationally, the GPI-anchor is attached to the protein in the endoplasmic reticulum and serves to target the protein to the cell surface. There, the glucosamine-inositol phospholipid moiety is cleaved off and the GPI-modified mannoprotein is covalently attached via its lipidless GPI glycan remnant to the 1,6-beta-glucan of the outer cell wall layer.

The protein localises to the secreted. Its subcellular location is the cell wall. It localises to the membrane. GPI-anchored hyphal cell wall protein required for hyphal growth and virulence. Involved in innate immune cell evasion through conferring resistance to neutrophil killing. Binds kininogen, the proteinaceous kinin precursor, and contributes to trigger the kinin-forming cascade on the cell surface. Production of kinins is often involved in the human host defense against microbial infections. In Candida albicans (strain SC5314 / ATCC MYA-2876) (Yeast), this protein is Hyphally regulated cell wall protein 1 (HYR1).